Reading from the N-terminus, the 263-residue chain is Ribonuclease HII (263 aa).

The 192-residue stretch at 71-262 folds into the RNase H type-2 domain; that stretch reads QAIAGIDEVG…VKSMCCDSTN (192 aa). 3 residues coordinate a divalent metal cation: aspartate 77, glutamate 78, and aspartate 172.

Belongs to the RNase HII family. The cofactor is Mn(2+). Requires Mg(2+) as cofactor.

The protein resides in the cytoplasm. It catalyses the reaction Endonucleolytic cleavage to 5'-phosphomonoester.. Its function is as follows. Endonuclease that specifically degrades the RNA of RNA-DNA hybrids. In Streptococcus pyogenes serotype M12 (strain MGAS2096), this protein is Ribonuclease HII.